The following is a 202-amino-acid chain: Ribonuclease HII (202 aa).

The RNase H type-2 domain occupies 18-202 (GQYAGVDEVG…KSFRPVREAM (185 aa)). Residues Asp24, Glu25, and Asp116 each contribute to the a divalent metal cation site.

This sequence belongs to the RNase HII family. It depends on Mn(2+) as a cofactor. Mg(2+) serves as cofactor.

It is found in the cytoplasm. It catalyses the reaction Endonucleolytic cleavage to 5'-phosphomonoester.. In terms of biological role, endonuclease that specifically degrades the RNA of RNA-DNA hybrids. This chain is Ribonuclease HII, found in Shewanella piezotolerans (strain WP3 / JCM 13877).